Here is a 520-residue protein sequence, read N- to C-terminus: NADH-quinone oxidoreductase subunit N (520 aa).

The next 14 helical transmembrane spans lie at Ala-13–Trp-33, Phe-55–Ala-75, Gly-87–Leu-107, Ala-115–Leu-135, Leu-141–Val-161, Phe-176–Ala-196, Phe-219–Phe-239, Ala-250–Phe-270, Trp-285–Leu-305, Met-313–Asp-333, Ala-339–Ile-359, Trp-383–Gly-403, Ile-425–Val-445, and Ser-468–Met-488. The segment covering Ala-494–Arg-508 has biased composition (low complexity). Residues Ala-494–Arg-520 form a disordered region.

It belongs to the complex I subunit 2 family. As to quaternary structure, NDH-1 is composed of 14 different subunits. Subunits NuoA, H, J, K, L, M, N constitute the membrane sector of the complex.

It is found in the cell inner membrane. It catalyses the reaction a quinone + NADH + 5 H(+)(in) = a quinol + NAD(+) + 4 H(+)(out). NDH-1 shuttles electrons from NADH, via FMN and iron-sulfur (Fe-S) centers, to quinones in the respiratory chain. The immediate electron acceptor for the enzyme in this species is believed to be ubiquinone. Couples the redox reaction to proton translocation (for every two electrons transferred, four hydrogen ions are translocated across the cytoplasmic membrane), and thus conserves the redox energy in a proton gradient. This is NADH-quinone oxidoreductase subunit N from Gemmatimonas aurantiaca (strain DSM 14586 / JCM 11422 / NBRC 100505 / T-27).